Here is a 239-residue protein sequence, read N- to C-terminus: tRNA (guanine-N(7)-)-methyltransferase (239 aa).

Residues glutamate 69, glutamate 94, aspartate 121, and aspartate 144 each contribute to the S-adenosyl-L-methionine site. Residue aspartate 144 is part of the active site. Position 148 (lysine 148) interacts with substrate. The interaction with RNA stretch occupies residues 150–155 (RHNKRR). Substrate-binding positions include aspartate 180 and 217–220 (TKFE).

It belongs to the class I-like SAM-binding methyltransferase superfamily. TrmB family. As to quaternary structure, monomer.

The enzyme catalyses guanosine(46) in tRNA + S-adenosyl-L-methionine = N(7)-methylguanosine(46) in tRNA + S-adenosyl-L-homocysteine. It functions in the pathway tRNA modification; N(7)-methylguanine-tRNA biosynthesis. Catalyzes the formation of N(7)-methylguanine at position 46 (m7G46) in tRNA. In Pectobacterium atrosepticum (strain SCRI 1043 / ATCC BAA-672) (Erwinia carotovora subsp. atroseptica), this protein is tRNA (guanine-N(7)-)-methyltransferase.